The primary structure comprises 370 residues: Probable G-protein coupled receptor 85 (370 aa).

The Extracellular segment spans residues Met-1–Thr-25. An N-linked (GlcNAc...) asparagine glycan is attached at Asn-3. Residues Ser-26–Val-46 form a helical membrane-spanning segment. The Cytoplasmic portion of the chain corresponds to Lys-47–Tyr-57. The chain crosses the membrane as a helical span at residues Phe-58–Phe-78. The Extracellular segment spans residues Asn-79 to Val-96. Asn-83 carries an N-linked (GlcNAc...) asparagine glycan. A disulfide bridge connects residues Cys-94 and Cys-172. Residues Ile-97 to Val-117 traverse the membrane as a helical segment. Residues Thr-118 to Thr-137 lie on the Cytoplasmic side of the membrane. Residues Cys-138–Leu-158 traverse the membrane as a helical segment. Residues Asp-159–Met-188 are Extracellular-facing. An N-linked (GlcNAc...) asparagine glycan is attached at Asn-182. Residues Leu-189 to Val-209 form a helical membrane-spanning segment. The Cytoplasmic segment spans residues His-210–Met-286. The helical transmembrane segment at Phe-287–Trp-307 threads the bilayer. The Extracellular portion of the chain corresponds to Arg-308–Gly-313. A helical transmembrane segment spans residues Pro-314 to Ile-334. The Cytoplasmic portion of the chain corresponds to Asn-335–Ile-370.

It belongs to the G-protein coupled receptor 1 family. As to quaternary structure, interacts with DLG4 and DLG3. As to expression, highly expressed in brain and testis. Lower levels in small intestine, placenta and spleen. In brain regions, detected in all regions tested, but somewhat lower levels in the corpus callosum, medulla and spinal cord.

The protein resides in the cell membrane. Its subcellular location is the endoplasmic reticulum. Orphan receptor. This is Probable G-protein coupled receptor 85 (GPR85) from Homo sapiens (Human).